The chain runs to 659 residues: Protein SCARECROW 1 (659 aa).

Disordered stretches follow at residues 1–33 (MGSS…ITSL) and 188–285 (SDPA…KQRD). Pro residues predominate over residues 190-228 (PAPPPPPPPSHPALLPPDATAPPPPPTSVAALPPPPPPQ). Residues 258 to 271 (AAAAAAAAAAALAA) show a composition bias toward low complexity. The stretch at 258–289 (AAAAAAAAAAALAAAKERKEEQRRKQRDEEGL) forms a coiled coil. A compositionally biased stretch (basic and acidic residues) spans 272–285 (AKERKEEQRRKQRD). One can recognise a GRAS domain in the interval 282 to 652 (KQRDEEGLHL…LCLLTASAWR (371 aa)). The interval 289-353 (LHLLTLLLQC…VSSCLGLYAP (65 aa)) is leucine repeat I (LRI). The short motif at 296-300 (LQCAE) is the LxCxE motif element. The tract at residues 372–437 (FQVFNGISPF…GGPPRVRLTG (66 aa)) is VHIID. The VHIID motif lies at 403-407 (VHIID). Residues 447-479 (ATGKRLSDFADTLGLPFEFCPVADKAGNLDPEK) are leucine repeat II (LRII). The interval 488–575 (VAVHWLRHSL…QQLLSREIRN (88 aa)) is PFYRE. Residues 578-652 (AVGGPARTGD…LCLLTASAWR (75 aa)) are SAW.

The protein belongs to the GRAS family. Interacts with SHR1, but not with SHR2.

It localises to the nucleus. In terms of biological role, transcription factor required for quiescent center cells specification and maintenance of surrounding stem cells, and for the asymmetric cell division involved in radial pattern formation in roots. Essential for cell division but not differentiation of the ground tissue. Regulates the radial organization of the shoot axial organs. Restricts SHR movment and sequesters it into the nucleus of the endodermis. In Oryza sativa subsp. indica (Rice), this protein is Protein SCARECROW 1 (SCR1).